Reading from the N-terminus, the 400-residue chain is NADH-quinone oxidoreductase subunit D (400 aa).

This sequence belongs to the complex I 49 kDa subunit family. As to quaternary structure, NDH-1 is composed of 14 different subunits. Subunits NuoB, C, D, E, F, and G constitute the peripheral sector of the complex.

It is found in the cell inner membrane. It catalyses the reaction a quinone + NADH + 5 H(+)(in) = a quinol + NAD(+) + 4 H(+)(out). NDH-1 shuttles electrons from NADH, via FMN and iron-sulfur (Fe-S) centers, to quinones in the respiratory chain. The immediate electron acceptor for the enzyme in this species is believed to be a menaquinone. Couples the redox reaction to proton translocation (for every two electrons transferred, four hydrogen ions are translocated across the cytoplasmic membrane), and thus conserves the redox energy in a proton gradient. The polypeptide is NADH-quinone oxidoreductase subunit D (Pelodictyon phaeoclathratiforme (strain DSM 5477 / BU-1)).